A 535-amino-acid polypeptide reads, in one-letter code: Sterol 26-hydroxylase, mitochondrial (535 aa).

The N-terminal 36 residues, 1-36, are a transit peptide targeting the mitochondrion; it reads MAALGCARLRWALLGPRVAGCGLCPQGARAKAAIPT. Lysine 286 is modified (N6-acetyllysine). Positions 387–401 are sterol-binding; sequence PLLKAVLKETLRLYP. Cysteine 480 lines the heme pocket. Residue lysine 524 is modified to N6-acetyllysine.

This sequence belongs to the cytochrome P450 family. Interacts with HSP70; this interaction is required for initial targeting to mitochondria. Requires heme as cofactor. In terms of tissue distribution, expressed in all tissues tested. Highest expression in liver and duodenum, followed by adrenal gland and lung. Low expression in kidney and spleen.

The protein localises to the mitochondrion inner membrane. It carries out the reaction 5beta-cholestane-3alpha,7alpha,12alpha-triol + 6 reduced [adrenodoxin] + 3 O2 + 5 H(+) = (25R)-3alpha,7alpha,12alpha-trihydroxy-5beta-cholestan-26-oate + 6 oxidized [adrenodoxin] + 4 H2O. The enzyme catalyses cholestanol + 2 reduced [adrenodoxin] + O2 + 2 H(+) = (25R)-26-hydroxycholestanol + 2 oxidized [adrenodoxin] + H2O. It catalyses the reaction (25R)-3beta-hydroxycholest-5-en-7-one-26-al + 2 reduced [adrenodoxin] + O2 + H(+) = (25R)-3beta-hydroxycholest-5-en-7-one-26-oate + 2 oxidized [adrenodoxin] + H2O. The catalysed reaction is (25R)-3beta,26-dihydroxycholest-5-en-7-one + 2 reduced [adrenodoxin] + O2 + 2 H(+) = (25R)-3beta-hydroxycholest-5-en-7-one-26-al + 2 oxidized [adrenodoxin] + 2 H2O. It carries out the reaction 7-oxocholesterol + 2 reduced [adrenodoxin] + O2 + 2 H(+) = (25R)-3beta,26-dihydroxycholest-5-en-7-one + 2 oxidized [adrenodoxin] + H2O. The enzyme catalyses calciol + 2 reduced [adrenodoxin] + O2 + 2 H(+) = calcidiol + 2 oxidized [adrenodoxin] + H2O. It catalyses the reaction (25R)-5beta-cholestane-3alpha,7alpha,12alpha,26-tetrol + 2 reduced [adrenodoxin] + O2 + 2 H(+) = (25R)-3alpha,7alpha,12alpha-trihydroxy-5beta-cholestan-26-al + 2 oxidized [adrenodoxin] + 2 H2O. The catalysed reaction is 2 reduced [adrenodoxin] + cholesterol + O2 + 2 H(+) = (25R)-cholest-5-ene-3beta,26-diol + 2 oxidized [adrenodoxin] + H2O. It carries out the reaction (25R)-3beta,4beta-dihydroxycholest-5-en-26-al + 2 reduced [adrenodoxin] + O2 + H(+) = (25R)-3beta,4beta-dihydroxycholest-5-en-26-oate + 2 oxidized [adrenodoxin] + H2O. The enzyme catalyses (25R)-4beta,26-dihydroxycholesterol + 2 reduced [adrenodoxin] + O2 + 2 H(+) = (25R)-3beta,4beta-dihydroxycholest-5-en-26-al + 2 oxidized [adrenodoxin] + 2 H2O. It catalyses the reaction 4beta-hydroxycholesterol + 2 reduced [adrenodoxin] + O2 + 2 H(+) = (25R)-4beta,26-dihydroxycholesterol + 2 oxidized [adrenodoxin] + H2O. The catalysed reaction is (25R)-3beta-hydroxy-5-cholesten-26-al + 2 reduced [adrenodoxin] + O2 + H(+) = (25R)-3beta-hydroxy-5-cholestenoate + 2 oxidized [adrenodoxin] + H2O. It carries out the reaction (25R)-cholest-5-ene-3beta,26-diol + 2 reduced [adrenodoxin] + O2 + 2 H(+) = (25R)-3beta-hydroxy-5-cholesten-26-al + 2 oxidized [adrenodoxin] + 2 H2O. The enzyme catalyses (25R)-3alpha,7alpha,12alpha-trihydroxy-5beta-cholestan-26-al + 2 reduced [adrenodoxin] + O2 + H(+) = (25R)-3alpha,7alpha,12alpha-trihydroxy-5beta-cholestan-26-oate + 2 oxidized [adrenodoxin] + H2O. It catalyses the reaction 5beta-cholestane-3alpha,7alpha,12alpha-triol + 2 reduced [adrenodoxin] + O2 + 2 H(+) = (25R)-5beta-cholestane-3alpha,7alpha,12alpha,26-tetrol + 2 oxidized [adrenodoxin] + H2O. Its pathway is hormone biosynthesis; cholecalciferol biosynthesis. It functions in the pathway steroid metabolism; cholesterol degradation. The protein operates within lipid metabolism; bile acid biosynthesis. Functionally, cytochrome P450 monooxygenase that catalyzes regio- and stereospecific hydroxylation of cholesterol and its derivatives. Hydroxylates (with R stereochemistry) the terminal methyl group of cholesterol side-chain in a three step reaction to yield at first a C26 alcohol, then a C26 aldehyde and finally a C26 acid. Regulates cholesterol homeostasis by catalyzing the conversion of excess cholesterol to bile acids via both the 'neutral' (classic) and the 'acid' (alternative) pathways. May also regulate cholesterol homeostasis via generation of active oxysterols, which act as ligands for NR1H2 and NR1H3 nuclear receptors, modulating the transcription of genes involved in lipid metabolism. Plays a role in cholestanol metabolism in the cerebellum. Similarly to cholesterol, hydroxylates cholestanol and may facilitate sterol diffusion through the blood-brain barrier to the systemic circulation for further degradation. Also hydroxylates retinal 7-ketocholesterol, a noxious oxysterol with pro-inflammatory and pro-apoptotic effects, and may play a role in its elimination from the retinal pigment epithelium. May play a redundant role in vitamin D biosynthesis. Catalyzes 25-hydroxylation of vitamin D3 that is required for its conversion to a functionally active form. The polypeptide is Sterol 26-hydroxylase, mitochondrial (CYP27A1) (Oryctolagus cuniculus (Rabbit)).